Here is a 265-residue protein sequence, read N- to C-terminus: 5'-nucleotidase SurE (265 aa).

A divalent metal cation-binding residues include Asp8, Asp9, Ser40, and Asn98.

Belongs to the SurE nucleotidase family. A divalent metal cation serves as cofactor.

It is found in the cytoplasm. It carries out the reaction a ribonucleoside 5'-phosphate + H2O = a ribonucleoside + phosphate. In terms of biological role, nucleotidase that shows phosphatase activity on nucleoside 5'-monophosphates. This Nostoc sp. (strain PCC 7120 / SAG 25.82 / UTEX 2576) protein is 5'-nucleotidase SurE.